We begin with the raw amino-acid sequence, 395 residues long: PCI domain-containing protein 2 homolog (395 aa).

Residues 208 to 389 enclose the PCI domain; it reads ITYKYFVGRR…NKLVVSKQNP (182 aa).

It belongs to the CSN12 family. Component of the nuclear pore complex (NPC)-associated TREX-2/AMEX complex (anchoring and mRNA export complex), composed of e(y)2, xmas and PCID2. Interaction between the TREX-2/AMEX complex and the ORC complex is required for ORC localization to mRNPs, and consequently mRNA export. Within the TREX-2/AMEX-ORC complex, interacts with Orc3 and Orc4. Interacts with sbr/NXF1. Interacts with Moe. Interacts with nudC; required to maintain stability in the cytoplasm. In terms of processing, mono- and poly-ubiquitinated.

Its subcellular location is the nucleus. The protein localises to the cytoplasm. The protein resides in the nucleus membrane. It is found in the cytoskeleton. Required for the export of nuclear mRNAs and involved in mRNA trafficking in the cytoplasm. Component of the nuclear pore complex (NPC)-associated TREX-2/AMEX complex (anchoring and mRNA export complex) which functions in docking export-competent ribonucleoprotein particles (mRNPs) to the nuclear entrance of the nuclear pore complex (nuclear basket), thereby enabling the export of mRNAs to the cytoplasm through the nuclear pores. Within the complex, specifically promotes the association of factors involved in regulating nuclear mRNA export, such as Moe, sbr/NXF1 and the ORC complex, to the mRNPs particles. In the cytoplasm, functions independently of its role in the TREX-2/AMEX complex, to promote cytoplasmic mRNA trafficking together with nudC. Associates with translationally active polysomes. The protein is PCI domain-containing protein 2 homolog of Drosophila melanogaster (Fruit fly).